Reading from the N-terminus, the 197-residue chain is Surfactant protein C (197 aa).

A propeptide spanning residues 1–23 is cleaved from the precursor; the sequence is MDVGSKEVLMESPPDYSAAPRGR. S-palmitoyl cysteine attachment occurs at residues C28 and C29. A propeptide spanning residues 59–197 is cleaved from the precursor; it reads HMSQKHTEMV…LCGEVPLYYI (139 aa). The region spanning 94–197 is the BRICHOS domain; that stretch reads FSIGSTGLVV…LCGEVPLYYI (104 aa). Cystine bridges form between C120–C148 and C121–C189.

The protein resides in the secreted. Its subcellular location is the extracellular space. The protein localises to the surface film. Pulmonary surfactant associated proteins promote alveolar stability by lowering the surface tension at the air-liquid interface in the peripheral air spaces. This chain is Surfactant protein C, found in Homo sapiens (Human).